A 393-amino-acid chain; its full sequence is NAD(P)H-quinone oxidoreductase subunit H, chloroplastic (393 aa).

This sequence belongs to the complex I 49 kDa subunit family. NDH is composed of at least 16 different subunits, 5 of which are encoded in the nucleus.

The protein localises to the plastid. Its subcellular location is the chloroplast thylakoid membrane. It carries out the reaction a plastoquinone + NADH + (n+1) H(+)(in) = a plastoquinol + NAD(+) + n H(+)(out). The catalysed reaction is a plastoquinone + NADPH + (n+1) H(+)(in) = a plastoquinol + NADP(+) + n H(+)(out). NDH shuttles electrons from NAD(P)H:plastoquinone, via FMN and iron-sulfur (Fe-S) centers, to quinones in the photosynthetic chain and possibly in a chloroplast respiratory chain. The immediate electron acceptor for the enzyme in this species is believed to be plastoquinone. Couples the redox reaction to proton translocation, and thus conserves the redox energy in a proton gradient. The sequence is that of NAD(P)H-quinone oxidoreductase subunit H, chloroplastic from Lepidium virginicum (Virginia pepperweed).